The chain runs to 73 residues: UPF0337 protein lp_1708 (73 aa).

Composition is skewed to basic and acidic residues over residues 1–35 and 44–73; these read MSDVNKKFDSKKDQLSGKAKEVEGKVTGDRAREAQ and KAKDKLADAEETVKGVVDEAKDKMKKKSDD. The interval 1–73 is disordered; that stretch reads MSDVNKKFDS…KDKMKKKSDD (73 aa).

It belongs to the UPF0337 (CsbD) family.

The sequence is that of UPF0337 protein lp_1708 from Lactiplantibacillus plantarum (strain ATCC BAA-793 / NCIMB 8826 / WCFS1) (Lactobacillus plantarum).